The sequence spans 706 residues: B-cell lymphoma 6 protein (706 aa).

Residues 32 to 99 (TDVVIVVSRE…MYTSRLNLRE (68 aa)) enclose the BTB domain. Residues 317 to 349 (EPPNAPLNRKGLVSPQSPQKSDCQPNSPTESCS) are disordered. The span at 330-349 (SPQSPQKSDCQPNSPTESCS) shows a compositional bias: polar residues. Serine 333 and serine 343 each carry phosphoserine; by MAPK1. Position 361 is a phosphoserine (serine 361). The required for interaction with NuRD complex and for transcriptional repressor activity stretch occupies residues 376 to 379 (KKYK). Lysine 379 is subject to N6-acetyllysine. Phosphoserine is present on serine 404. The tract at residues 407 to 467 (AYTAPPACQP…PRSSSESHSP (61 aa)) is disordered. The span at 424 to 456 (DLQSPTKLSASGEDSTIPQASRLNNIVNRSMTG) shows a compositional bias: polar residues. The span at 457 to 466 (SPRSSSESHS) shows a compositional bias: low complexity. C2H2-type zinc fingers lie at residues 518-541 (FFCNECDCRFSEEASLKRHTLQTH), 546-568 (YKCDRCQASFRYKGNLASHKTVH), 574-596 (YRCNICGAQFNRPANLKTHTRIH), 602-624 (YKCETCGARFVQVAHLRAHVLIH), 630-652 (YPCEICGTRFRHLQTLKSHLRIH), and 658-681 (YHCEKCNLHFRHKSQLRLHLRQKH).

Homodimer. Interacts (via BTB domain) with the corepressors BCOR, NCOR1 and SMRT/NCOR2; the interactions are direct. Forms preferably ternary complexes with BCOR and SMRT/NCOR2 on target gene promoters but, on enhancer elements, interacts with SMRT/NCOR2 and HDAC3 to repress proximal gene expression. Interacts with histone deacetylases HDAC2, HDAC5 and HDAC9 (via the catalytic domain). Interacts with ZBTB7 and BCL6B. Interacts with SCF(FBXO11) complex; the interaction is independent of phosphorylation and promotes ubiquitination. Interacts (when phosphorylated) with PIN1; the interaction is required for BCL6 degradation upon genotoxic stress. Interacts with ZBTB17; inhibits ZBTB17 transcriptional activity. Interacts with CTBP1, autoinhibits its transcriptional expression. Interacts with NOTCH1 NCID and SIRT1; leads to a epigenetic repression of selective NOTCH1-target genes. Interacts (nor via BTB domain neither acetylated) with the NuRD complex components CHD4, HDAC1, MBD3 and MTA3; the interaction with MTA3 inhibits BCL6 acetylation and is required for BCL6 transpriptional repression. In terms of processing, phosphorylated by MAPK1 in response to antigen receptor activation at Ser-333 and Ser-343. Phosphorylated by ATM in response to genotoxic stress. Phosphorylation induces its degradation by ubiquitin/proteasome pathway. Polyubiquitinated. Polyubiquitinated by SCF(FBXO11), leading to its degradation by the proteasome. Ubiquitinated by the SCF(FBXL17) complex, leading to its degradation by the proteasome: ubiquitination by the SCF(FBXL17) complex takes place when aberrant BTB domain dimers are formed. Post-translationally, acetylated at Lys-379 by EP300 which inhibits the interaction with NuRD complex and the transcriptional repressor function. Deacetylated by HDAC- and SIR2-dependent pathways. In terms of tissue distribution, expressed in germinal center T- and B-cells and in primary immature dendritic cells.

It localises to the nucleus. In terms of biological role, transcriptional repressor mainly required for germinal center (GC) formation and antibody affinity maturation which has different mechanisms of action specific to the lineage and biological functions. Forms complexes with different corepressors and histone deacetylases to repress the transcriptional expression of different subsets of target genes. Represses its target genes by binding directly to the DNA sequence 5'-TTCCTAGAA-3' (BCL6-binding site) or indirectly by repressing the transcriptional activity of transcription factors. In GC B-cells, represses genes that function in differentiation, inflammation, apoptosis and cell cycle control, also autoregulates its transcriptional expression and up-regulates, indirectly, the expression of some genes important for GC reactions, such as AICDA, through the repression of microRNAs expression, like miR155. An important function is to allow GC B-cells to proliferate very rapidly in response to T-cell dependent antigens and tolerate the physiological DNA breaks required for immunglobulin class switch recombination and somatic hypermutation without inducing a p53/TP53-dependent apoptotic response. In follicular helper CD4(+) T-cells (T(FH) cells), promotes the expression of T(FH)-related genes but inhibits the differentiation of T(H)1, T(H)2 and T(H)17 cells. Also required for the establishment and maintenance of immunological memory for both T- and B-cells. Suppresses macrophage proliferation through competition with STAT5 for STAT-binding motifs binding on certain target genes, such as CCL2 and CCND2. In response to genotoxic stress, controls cell cycle arrest in GC B-cells in both p53/TP53-dependedent and -independent manners. Besides, also controls neurogenesis through the alteration of the composition of NOTCH-dependent transcriptional complexes at selective NOTCH targets, such as HES5, including the recruitment of the deacetylase SIRT1 and resulting in an epigenetic silencing leading to neuronal differentiation. The sequence is that of B-cell lymphoma 6 protein (BCL6) from Homo sapiens (Human).